A 157-amino-acid polypeptide reads, in one-letter code: Transcription elongation factor GreA (157 aa).

Residues 46–73 (AEYHSARERQSFIEGRIAELEEIISAAE) adopt a coiled-coil conformation.

It belongs to the GreA/GreB family.

In terms of biological role, necessary for efficient RNA polymerase transcription elongation past template-encoded arresting sites. The arresting sites in DNA have the property of trapping a certain fraction of elongating RNA polymerases that pass through, resulting in locked ternary complexes. Cleavage of the nascent transcript by cleavage factors such as GreA or GreB allows the resumption of elongation from the new 3'terminus. GreA releases sequences of 2 to 3 nucleotides. This Acidiphilium cryptum (strain JF-5) protein is Transcription elongation factor GreA.